A 357-amino-acid chain; its full sequence is Protein pelota homolog (357 aa).

The protein belongs to the eukaryotic release factor 1 family. Pelota subfamily. Monomer. Requires a divalent metal cation as cofactor.

It localises to the cytoplasm. Functionally, may function in recognizing stalled ribosomes, interact with stem-loop structures in stalled mRNA molecules, and effect endonucleolytic cleavage of the mRNA. May play a role in the release non-functional ribosomes and degradation of damaged mRNAs. Has endoribonuclease activity. The protein is Protein pelota homolog of Thermococcus onnurineus (strain NA1).